The following is a 441-amino-acid chain: Ribosomal protein uS12 methylthiotransferase RimO (441 aa).

One can recognise an MTTase N-terminal domain in the interval 8-118 (PKIGFVSLGC…VLEHVHHYVP (111 aa)). [4Fe-4S] cluster-binding residues include cysteine 17, cysteine 53, cysteine 82, cysteine 150, cysteine 154, and cysteine 157. The 238-residue stretch at 136–373 (LTPRHYAYLK…MQLQQQISAE (238 aa)) folds into the Radical SAM core domain. Positions 376 to 441 (QEKVGKEILV…DEYDLWGSRV (66 aa)) constitute a TRAM domain.

The protein belongs to the methylthiotransferase family. RimO subfamily. The cofactor is [4Fe-4S] cluster.

The protein localises to the cytoplasm. The catalysed reaction is L-aspartate(89)-[ribosomal protein uS12]-hydrogen + (sulfur carrier)-SH + AH2 + 2 S-adenosyl-L-methionine = 3-methylsulfanyl-L-aspartate(89)-[ribosomal protein uS12]-hydrogen + (sulfur carrier)-H + 5'-deoxyadenosine + L-methionine + A + S-adenosyl-L-homocysteine + 2 H(+). In terms of biological role, catalyzes the methylthiolation of an aspartic acid residue of ribosomal protein uS12. The sequence is that of Ribosomal protein uS12 methylthiotransferase RimO from Escherichia fergusonii (strain ATCC 35469 / DSM 13698 / CCUG 18766 / IAM 14443 / JCM 21226 / LMG 7866 / NBRC 102419 / NCTC 12128 / CDC 0568-73).